Reading from the N-terminus, the 121-residue chain is Large ribosomal subunit protein bL19 (121 aa).

This sequence belongs to the bacterial ribosomal protein bL19 family.

Its function is as follows. This protein is located at the 30S-50S ribosomal subunit interface and may play a role in the structure and function of the aminoacyl-tRNA binding site. The sequence is that of Large ribosomal subunit protein bL19 from Chloroherpeton thalassium (strain ATCC 35110 / GB-78).